A 301-amino-acid polypeptide reads, in one-letter code: Indole-3-glycerol phosphate synthase (301 aa).

The protein belongs to the TrpC family.

The catalysed reaction is 1-(2-carboxyphenylamino)-1-deoxy-D-ribulose 5-phosphate + H(+) = (1S,2R)-1-C-(indol-3-yl)glycerol 3-phosphate + CO2 + H2O. It participates in amino-acid biosynthesis; L-tryptophan biosynthesis; L-tryptophan from chorismate: step 4/5. This is Indole-3-glycerol phosphate synthase from Prochlorococcus marinus (strain MIT 9313).